Reading from the N-terminus, the 359-residue chain is Membrane-bound lytic murein transglycosylase C (359 aa).

Positions 1–16 (MKKYLALALIAPLLIS) are cleaved as a signal peptide. A lipid anchor (N-palmitoyl cysteine) is attached at cysteine 17. Cysteine 17 is lipidated: S-diacylglycerol cysteine.

It belongs to the transglycosylase Slt family.

It localises to the cell outer membrane. The catalysed reaction is Exolytic cleavage of the (1-&gt;4)-beta-glycosidic linkage between N-acetylmuramic acid (MurNAc) and N-acetylglucosamine (GlcNAc) residues in peptidoglycan, from either the reducing or the non-reducing ends of the peptidoglycan chains, with concomitant formation of a 1,6-anhydrobond in the MurNAc residue.. Its function is as follows. Murein-degrading enzyme. May play a role in recycling of muropeptides during cell elongation and/or cell division. The chain is Membrane-bound lytic murein transglycosylase C from Escherichia coli O139:H28 (strain E24377A / ETEC).